The sequence spans 496 residues: Probable cytosol aminopeptidase (496 aa).

Mn(2+)-binding residues include lysine 257 and aspartate 262. Lysine 269 is an active-site residue. Residues aspartate 281, aspartate 341, and glutamate 343 each coordinate Mn(2+). Residue arginine 345 is part of the active site.

Belongs to the peptidase M17 family. It depends on Mn(2+) as a cofactor.

Its subcellular location is the cytoplasm. The catalysed reaction is Release of an N-terminal amino acid, Xaa-|-Yaa-, in which Xaa is preferably Leu, but may be other amino acids including Pro although not Arg or Lys, and Yaa may be Pro. Amino acid amides and methyl esters are also readily hydrolyzed, but rates on arylamides are exceedingly low.. It carries out the reaction Release of an N-terminal amino acid, preferentially leucine, but not glutamic or aspartic acids.. Functionally, presumably involved in the processing and regular turnover of intracellular proteins. Catalyzes the removal of unsubstituted N-terminal amino acids from various peptides. In Synechococcus sp. (strain CC9311), this protein is Probable cytosol aminopeptidase.